Consider the following 387-residue polypeptide: S-adenosylmethionine synthase (387 aa).

His16 is a binding site for ATP. Asp18 is a Mg(2+) binding site. Glu44 serves as a coordination point for K(+). L-methionine-binding residues include Glu57 and Gln100. A flexible loop region spans residues 100 to 110 (QSPDIAQGVDR). Residues 167–169 (DAK), 232–233 (RF), Asp241, 247–248 (RK), Ala264, and Lys268 each bind ATP. Residue Asp241 participates in L-methionine binding. Lys272 provides a ligand contact to L-methionine.

It belongs to the AdoMet synthase family. In terms of assembly, homotetramer; dimer of dimers. It depends on Mg(2+) as a cofactor. Requires K(+) as cofactor.

The protein resides in the cytoplasm. It catalyses the reaction L-methionine + ATP + H2O = S-adenosyl-L-methionine + phosphate + diphosphate. It participates in amino-acid biosynthesis; S-adenosyl-L-methionine biosynthesis; S-adenosyl-L-methionine from L-methionine: step 1/1. Functionally, catalyzes the formation of S-adenosylmethionine (AdoMet) from methionine and ATP. The overall synthetic reaction is composed of two sequential steps, AdoMet formation and the subsequent tripolyphosphate hydrolysis which occurs prior to release of AdoMet from the enzyme. The chain is S-adenosylmethionine synthase from Cupriavidus metallidurans (strain ATCC 43123 / DSM 2839 / NBRC 102507 / CH34) (Ralstonia metallidurans).